Consider the following 588-residue polypeptide: 2-isopropylmalate synthase (588 aa).

One can recognise a Pyruvate carboxyltransferase domain in the interval 40 to 314 (PRWCAVDLRD…DPQIDFSDLD (275 aa)). Residues aspartate 49, histidine 253, histidine 255, and asparagine 289 each contribute to the Mg(2+) site. The regulatory domain stretch occupies residues 456-588 (APLDRVEEKW…TVREPELAAV (133 aa)).

This sequence belongs to the alpha-IPM synthase/homocitrate synthase family. LeuA type 2 subfamily. As to quaternary structure, homodimer. It depends on Mg(2+) as a cofactor.

It localises to the cytoplasm. It catalyses the reaction 3-methyl-2-oxobutanoate + acetyl-CoA + H2O = (2S)-2-isopropylmalate + CoA + H(+). Its pathway is amino-acid biosynthesis; L-leucine biosynthesis; L-leucine from 3-methyl-2-oxobutanoate: step 1/4. Catalyzes the condensation of the acetyl group of acetyl-CoA with 3-methyl-2-oxobutanoate (2-ketoisovalerate) to form 3-carboxy-3-hydroxy-4-methylpentanoate (2-isopropylmalate). This Clavibacter michiganensis subsp. michiganensis (strain NCPPB 382) protein is 2-isopropylmalate synthase.